A 189-amino-acid chain; its full sequence is Chitin synthase 1 (189 aa).

It belongs to the chitin synthase family. Class I subfamily.

It localises to the cell membrane. The catalysed reaction is [(1-&gt;4)-N-acetyl-beta-D-glucosaminyl](n) + UDP-N-acetyl-alpha-D-glucosamine = [(1-&gt;4)-N-acetyl-beta-D-glucosaminyl](n+1) + UDP + H(+). Functionally, polymerizes chitin, a structural polymer of the cell wall and septum, by transferring the sugar moiety of UDP-GlcNAc to the non-reducing end of the growing chitin polymer. This Aspergillus niger protein is Chitin synthase 1 (chs1).